The following is a 462-amino-acid chain: Cysteine--tRNA ligase (462 aa).

Position 28 (Cys-28) interacts with Zn(2+). The short motif at 30 to 40 is the 'HIGH' region element; that stretch reads VTAYDLCHIGH. Positions 209, 234, and 238 each coordinate Zn(2+). The 'KMSKS' region motif lies at 266 to 270; the sequence is KMSKS. ATP is bound at residue Lys-269.

This sequence belongs to the class-I aminoacyl-tRNA synthetase family. Monomer. It depends on Zn(2+) as a cofactor.

It localises to the cytoplasm. The catalysed reaction is tRNA(Cys) + L-cysteine + ATP = L-cysteinyl-tRNA(Cys) + AMP + diphosphate. The sequence is that of Cysteine--tRNA ligase from Baumannia cicadellinicola subsp. Homalodisca coagulata.